A 317-amino-acid polypeptide reads, in one-letter code: tRNA dimethylallyltransferase (317 aa).

Glycine 18–threonine 25 contacts ATP. Threonine 20–threonine 25 is a binding site for substrate. Interaction with substrate tRNA regions lie at residues aspartate 43 to leucine 46, glutamine 167 to arginine 171, and lysine 281 to arginine 288.

This sequence belongs to the IPP transferase family. As to quaternary structure, monomer. Mg(2+) is required as a cofactor.

It catalyses the reaction adenosine(37) in tRNA + dimethylallyl diphosphate = N(6)-dimethylallyladenosine(37) in tRNA + diphosphate. Its function is as follows. Catalyzes the transfer of a dimethylallyl group onto the adenine at position 37 in tRNAs that read codons beginning with uridine, leading to the formation of N6-(dimethylallyl)adenosine (i(6)A). The chain is tRNA dimethylallyltransferase from Alkalilimnicola ehrlichii (strain ATCC BAA-1101 / DSM 17681 / MLHE-1).